The sequence spans 246 residues: Virulence plasmid protein pGP6-D (246 aa).

It belongs to the UPF0137 (pGP6-D) family.

This is Virulence plasmid protein pGP6-D from Chlamydia muridarum (strain MoPn / Nigg).